The sequence spans 1377 residues: Hemoglobin-binding protease hbp autotransporter (1377 aa).

Residues 1 to 52 form the signal peptide; that stretch reads MNRIYSLRYSAVARGFIAVSEFARKCVHKSVRRLCFPVLLLIPVLFSAGSLA. A Peptidase S6 domain is found at 53-302; sequence GTVNNELGYQ…AVIPLDFIGQ (250 aa). Residues H125, D153, and S259 each act as charge relay system in the active site. Residues 1111 to 1377 enclose the Autotransporter domain; that stretch reads DINGEAGTWV…AINANIRYSF (267 aa).

Post-translationally, cleaved to release the mature protein from the outer membrane.

The protein resides in the periplasm. It is found in the secreted. The protein localises to the cell surface. It localises to the cell outer membrane. With respect to regulation, protease activity is inhibited by 3,4-dichloroisocoumarin. Functionally, interacts with hemoglobin, degrades it and subsequently binds the released heme. Could make heme accessible not only for E.coli, but also for B.fragilis during mixed intra-abdominal infections. Has a role in abscess formation. This chain is Hemoglobin-binding protease hbp autotransporter (hbp), found in Escherichia coli.